The primary structure comprises 94 residues: Co-chaperonin GroES (94 aa).

Belongs to the GroES chaperonin family. As to quaternary structure, heptamer of 7 subunits arranged in a ring. Interacts with the chaperonin GroEL.

The protein resides in the cytoplasm. In terms of biological role, together with the chaperonin GroEL, plays an essential role in assisting protein folding. The GroEL-GroES system forms a nano-cage that allows encapsulation of the non-native substrate proteins and provides a physical environment optimized to promote and accelerate protein folding. GroES binds to the apical surface of the GroEL ring, thereby capping the opening of the GroEL channel. This is Co-chaperonin GroES from Listeria welshimeri serovar 6b (strain ATCC 35897 / DSM 20650 / CCUG 15529 / CIP 8149 / NCTC 11857 / SLCC 5334 / V8).